Consider the following 165-residue polypeptide: UPF0254 protein MmarC5_0742 (165 aa).

The protein belongs to the UPF0254 family.

The protein is UPF0254 protein MmarC5_0742 of Methanococcus maripaludis (strain C5 / ATCC BAA-1333).